Consider the following 243-residue polypeptide: MHSQPYLLSPTPNTPFPPAEHALHEPNGLLAIGGDLTPQRLLAAYRSGIFPWFTEGQPPLWWSPDPRTVFHSDNIHLSRRFRRSLRTSTWTVRADTMFAAVIDACASTPRRGQDGTWITANMREAYLTLHQHGYAHSVEVFDGTMLVGGIYGVAIGRMFFGESMFSTHNGASKIALASLAYFLHTHSVPLIDAQVENQHLLNLGAERWPRRDFLTSVRRLITQTELPACWSVLFGEKLSRDLV.

Positions 1 to 22 (MHSQPYLLSPTPNTPFPPAEHA) are disordered.

It belongs to the L/F-transferase family.

It localises to the cytoplasm. The catalysed reaction is N-terminal L-lysyl-[protein] + L-leucyl-tRNA(Leu) = N-terminal L-leucyl-L-lysyl-[protein] + tRNA(Leu) + H(+). It catalyses the reaction N-terminal L-arginyl-[protein] + L-leucyl-tRNA(Leu) = N-terminal L-leucyl-L-arginyl-[protein] + tRNA(Leu) + H(+). It carries out the reaction L-phenylalanyl-tRNA(Phe) + an N-terminal L-alpha-aminoacyl-[protein] = an N-terminal L-phenylalanyl-L-alpha-aminoacyl-[protein] + tRNA(Phe). In terms of biological role, functions in the N-end rule pathway of protein degradation where it conjugates Leu, Phe and, less efficiently, Met from aminoacyl-tRNAs to the N-termini of proteins containing an N-terminal arginine or lysine. This is Leucyl/phenylalanyl-tRNA--protein transferase from Xylella fastidiosa (strain M23).